The primary structure comprises 136 residues: NADPH-dependent 7-cyano-7-deazaguanine reductase (136 aa).

Cys50 (thioimide intermediate) is an active-site residue. Asp57 serves as the catalytic Proton donor. Substrate contacts are provided by residues 72–74 (YEL) and 91–92 (HE).

It belongs to the GTP cyclohydrolase I family. QueF type 1 subfamily.

Its subcellular location is the cytoplasm. It catalyses the reaction 7-aminomethyl-7-carbaguanine + 2 NADP(+) = 7-cyano-7-deazaguanine + 2 NADPH + 3 H(+). Its pathway is tRNA modification; tRNA-queuosine biosynthesis. Its function is as follows. Catalyzes the NADPH-dependent reduction of 7-cyano-7-deazaguanine (preQ0) to 7-aminomethyl-7-deazaguanine (preQ1). This Prochlorococcus marinus (strain AS9601) protein is NADPH-dependent 7-cyano-7-deazaguanine reductase.